The primary structure comprises 142 residues: Transcription antitermination protein NusB (142 aa).

This sequence belongs to the NusB family.

Involved in transcription antitermination. Required for transcription of ribosomal RNA (rRNA) genes. Binds specifically to the boxA antiterminator sequence of the ribosomal RNA (rrn) operons. The protein is Transcription antitermination protein NusB of Thermobifida fusca (strain YX).